We begin with the raw amino-acid sequence, 39 residues long: TIINVKCTSPKQCLKPCKDLYGPHAGAKCMNGKCKCYNN.

3 disulfides stabilise this stretch: Cys-7-Cys-29, Cys-13-Cys-34, and Cys-17-Cys-36. Asn-39 bears the Asparagine amide mark.

Belongs to the short scorpion toxin superfamily. Potassium channel inhibitor family. Alpha-KTx 02 subfamily. As to expression, expressed by the venom gland.

It is found in the secreted. Functionally, blocks Kv1.3/KCNA3 voltage-gated potassium channels of human T-lymphocytes (Kd=0.25 nM). This is Potassium channel toxin alpha-KTx 2.9 from Centruroides elegans (Bark scorpion).